Here is a 346-residue protein sequence, read N- to C-terminus: Methylthioribose-1-phosphate isomerase (346 aa).

Substrate-binding positions include 48 to 50 (RGA), arginine 91, and glutamine 196. The active-site Proton donor is the aspartate 237. 247 to 248 (NK) lines the substrate pocket.

It belongs to the eIF-2B alpha/beta/delta subunits family. MtnA subfamily.

The catalysed reaction is 5-(methylsulfanyl)-alpha-D-ribose 1-phosphate = 5-(methylsulfanyl)-D-ribulose 1-phosphate. The protein operates within amino-acid biosynthesis; L-methionine biosynthesis via salvage pathway; L-methionine from S-methyl-5-thio-alpha-D-ribose 1-phosphate: step 1/6. Functionally, catalyzes the interconversion of methylthioribose-1-phosphate (MTR-1-P) into methylthioribulose-1-phosphate (MTRu-1-P). The protein is Methylthioribose-1-phosphate isomerase of Thermosipho melanesiensis (strain DSM 12029 / CIP 104789 / BI429).